We begin with the raw amino-acid sequence, 424 residues long: Zinc finger protein 597 (424 aa).

The KRAB domain maps to 14-88 (ILFEDLAVYF…KYPIAAPLVP (75 aa)). C2H2-type zinc fingers lie at residues 156–178 (YKCPECDQNFSDHSYLVLHQKIH), 184–206 (HKCGDCGKIFNHRANLRTHRRIH), 212–234 (YKCAKCSASFRQHSHLSRHMNSH), and 240–262 (YTCSICGRGFMWLPGLAQHQKSH). Lysine 300 participates in a covalent cross-link: Glycyl lysine isopeptide (Lys-Gly) (interchain with G-Cter in SUMO2). 3 consecutive C2H2-type zinc fingers follow at residues 341-363 (LQCPDCDMTFPCFSELISHQNIH), 369-391 (HKCKTCEESFALDSELACHQKSH), and 397-419 (FKCTVCGKTFKSNLHLITHKRTH).

Belongs to the krueppel C2H2-type zinc-finger protein family.

The protein resides in the nucleus. May be involved in transcriptional regulation. This is Zinc finger protein 597 (ZNF597) from Homo sapiens (Human).